The primary structure comprises 98 residues: NADH-ubiquinone oxidoreductase chain 4L (98 aa).

Helical transmembrane passes span 1 to 21, 29 to 49, and 61 to 81; these read MSMV…GLLM, SLLC…VTIL, and IILL…LVMV.

This sequence belongs to the complex I subunit 4L family. Core subunit of respiratory chain NADH dehydrogenase (Complex I) which is composed of 45 different subunits.

It localises to the mitochondrion inner membrane. The catalysed reaction is a ubiquinone + NADH + 5 H(+)(in) = a ubiquinol + NAD(+) + 4 H(+)(out). In terms of biological role, core subunit of the mitochondrial membrane respiratory chain NADH dehydrogenase (Complex I) which catalyzes electron transfer from NADH through the respiratory chain, using ubiquinone as an electron acceptor. Part of the enzyme membrane arm which is embedded in the lipid bilayer and involved in proton translocation. In Halichoerus grypus (Gray seal), this protein is NADH-ubiquinone oxidoreductase chain 4L (MT-ND4L).